A 139-amino-acid chain; its full sequence is MHEWALADGIVRTALDYAQREGAKKLLAIQVVLGELQDVNAEIVEFAMKELLKGTIGEGAEIEFIEEEAVFKCRDCGHEWKLKEVKGSFDERIKEDIHFIPEVVHAFLACPKCGSRDFEVVQGRGVYISGIKIEKEGEA.

Position 2 (H2) interacts with Ni(2+). 4 residues coordinate Zn(2+): C73, C76, C110, and C113.

This sequence belongs to the HypA/HybF family.

Functionally, involved in the maturation of [NiFe] hydrogenases. Required for nickel insertion into the metal center of the hydrogenase. This is Hydrogenase maturation factor HypA from Thermococcus onnurineus (strain NA1).